A 704-amino-acid chain; its full sequence is mRNA (2'-O-methyladenosine-N(6)-)-methyltransferase (704 aa).

Positions 1 to 33 (MANENHGSPREEASLLSHSPGTSNQSQPCSPKP) are disordered. Residues 16–29 (LSHSPGTSNQSQPC) show a composition bias toward polar residues. The residue at position 30 (serine 30) is a Phosphoserine. The region spanning 43-77 (ELVHAGWEKCWSRRENRPYYFNRFTNQSLWEMPVL) is the WW domain. Residues 88 to 151 (GLNATPLPQD…PSSPSIPGTP (64 aa)) form a disordered region. Positions 109 to 113 (KPRKR) match the Nuclear localization signal motif. Phosphoserine is present on serine 116. Positions 136–149 (PTGQSVPSSPSIPG) are enriched in polar residues. A Phosphothreonine modification is found at threonine 152. Substrate contacts are provided by arginine 235 and arginine 265. 553-556 (NPPF) is a binding site for S-adenosyl-L-methionine. Substrate is bound by residues glutamate 558 and 588–592 (WREPP). An S-adenosyl-L-methionine-binding site is contributed by 614-616 (FEH). The segment at 663–704 (LSAAYRQSGRSHSSGSSSSSSSEAKDRDSGREQGPSREPHPT) is disordered. The Nuclear localization signal signature appears at 669 to 684 (QSGRSHSSGSSSSSSS). Positions 670–684 (SGRSHSSGSSSSSSS) are enriched in low complexity. Over residues 685–704 (EAKDRDSGREQGPSREPHPT) the composition is skewed to basic and acidic residues.

The protein belongs to the CAPAM family. In terms of assembly, interacts with POLR2A; interacts with the phosphorylated C-terminal domain (CTD) of POLR2A. As to expression, ubiquitous.

It localises to the nucleus. The catalysed reaction is a 5'-end (N(7)-methyl 5'-triphosphoguanosine)-(2'-O-methyladenosine) in mRNA + S-adenosyl-L-methionine = a 5'-end (N(7)-methyl 5'-triphosphoguanosine)-(N(6),2'-O-dimethyladenosine) in mRNA + S-adenosyl-L-homocysteine + H(+). Its activity is regulated as follows. Cap-specific adenosine methyltransferase activity is inhibited by zinc. Functionally, cap-specific adenosine methyltransferase that catalyzes formation of N(6),2'-O-dimethyladenosine cap (m6A(m)) by methylating the adenosine at the second transcribed position of capped mRNAs. Recruited to the early elongation complex of RNA polymerase II (RNAPII) via interaction with POLR2A and mediates formation of m6A(m) co-transcriptionally. The protein is mRNA (2'-O-methyladenosine-N(6)-)-methyltransferase of Homo sapiens (Human).